We begin with the raw amino-acid sequence, 86 residues long: Mu-theraphotoxin-Cg2a 3 (86 aa).

Positions 1 to 21 (MKVSVVITLAVLGVMFVWASA) are cleaved as a signal peptide. Positions 22–50 (AELKERGSDQRDSPAWIKSMERIFQSEER) are excised as a propeptide. 3 cysteine pairs are disulfide-bonded: Cys52–Cys66, Cys59–Cys71, and Cys65–Cys78. At Phe84 the chain carries Phenylalanine amide.

Belongs to the neurotoxin 10 (Hwtx-1) family. 37 (Jztx-31) subfamily. As to expression, expressed by the venom gland.

It localises to the secreted. Functionally, inhibits both peak current and fast inactivation of voltage-gated sodium channels (Nav) channels. Inhibits the inactivation of Nav on DRG neurons (EC(50)=1.77 uM) and peak current of cardiac myocytes (IC(50)=0.90 uM). In Chilobrachys guangxiensis (Chinese earth tiger tarantula), this protein is Mu-theraphotoxin-Cg2a 3.